Consider the following 298-residue polypeptide: Glycine--tRNA ligase alpha subunit (298 aa).

The protein belongs to the class-II aminoacyl-tRNA synthetase family. As to quaternary structure, tetramer of two alpha and two beta subunits.

It localises to the cytoplasm. The catalysed reaction is tRNA(Gly) + glycine + ATP = glycyl-tRNA(Gly) + AMP + diphosphate. This is Glycine--tRNA ligase alpha subunit from Helicobacter pylori (strain Shi470).